The following is a 315-amino-acid chain: Olfactory receptor 51L1 (315 aa).

The Extracellular segment spans residues 1 to 27 (MGDWNNSDAVEPIFILRGFPGLEYVHS). The N-linked (GlcNAc...) asparagine glycan is linked to Asn-5. Residues 28-48 (WLSILFCLAYLVAFMGNVTIL) form a helical membrane-spanning segment. Residues 49–56 (SVIWIESS) lie on the Cytoplasmic side of the membrane. Residues 57-77 (LHQPMYYFISILAVNDLGMSL) form a helical membrane-spanning segment. Topologically, residues 78–101 (STLPTMLAVLWLDAPEIQASACYA) are extracellular. Cys-99 and Cys-191 are oxidised to a cystine. A helical transmembrane segment spans residues 102-122 (QLFFIHTFTFLESSVLLAMAF). The Cytoplasmic segment spans residues 123–141 (DRFVAICHPLHYPTILTNS). A helical transmembrane segment spans residues 142-162 (VIGKIGLACLLRSLGVVLPTP). The Extracellular segment spans residues 163–198 (LLLRHYHYCHGNALSHAFCLHQDVLRLSCTDARTNS). A helical membrane pass occupies residues 199 to 219 (IYGLCVVIATLGVDSIFILLS). At 220-239 (YVLILNTVLDIASREEQLKA) the chain is on the cytoplasmic side. Residues 240 to 260 (LNTCVSHICVVLIFFVPVIGV) traverse the membrane as a helical segment. Topologically, residues 261–275 (SMVHRFGKHLSPIVH) are extracellular. Residues 276 to 296 (ILMADIYLLLPPVLNPIVYSV) form a helical membrane-spanning segment. Residues 297–315 (RTKQIRLGILHKFVLRRRF) lie on the Cytoplasmic side of the membrane.

This sequence belongs to the G-protein coupled receptor 1 family.

It is found in the cell membrane. Odorant receptor. The sequence is that of Olfactory receptor 51L1 (OR51L1) from Homo sapiens (Human).